Reading from the N-terminus, the 308-residue chain is Taste receptor type 2 member 43 (308 aa).

Met-1 is a topological domain (extracellular). A helical transmembrane segment spans residues 2-22 (ITFLPIIFSILVVFTFVIGNF). Topologically, residues 23–46 (ANGFIALVNSIEWVKRQKISFADQ) are cytoplasmic. Residues 47–67 (ILTALAVSRVGLLWILLLNWY) form a helical membrane-spanning segment. Residues 68–86 (STVLNPAFYSVEVRTIAYN) lie on the Extracellular side of the membrane. The chain crosses the membrane as a helical span at residues 87-107 (LWAVINHFSNWLATSLSIFYL). Residues 108-126 (LKIANFSNLIFLHLRRRVK) lie on the Cytoplasmic side of the membrane. The helical transmembrane segment at 127–147 (SVVLVILWGPLLFLVCHLFVV) threads the bilayer. The Extracellular segment spans residues 148 to 178 (NMNEIIQTKEYEGNMTWKSKLRSAMYLSNTT). N-linked (GlcNAc...) asparagine glycans are attached at residues Asn-161 and Asn-176. The chain crosses the membrane as a helical span at residues 179–199 (VTILANLVPFILTLISFLLLI). Topologically, residues 200-229 (CSLCKHLKKMQLRDKGSQDPSTKVHIKALQ) are cytoplasmic. Residues 230–249 (TVISLSLCAIYFLSIMISSW) form a helical membrane-spanning segment. Residues 250-258 (SLGRVENKA) lie on the Extracellular side of the membrane. Residues 259–279 (IFMFCKAIRFSYPSAHAFILI) traverse the membrane as a helical segment. At 280 to 308 (WGNKKLKQTLLSVLWNVRYCVKGQKLQSP) the chain is on the cytoplasmic side.

The protein belongs to the G-protein coupled receptor T2R family.

The protein resides in the membrane. The protein localises to the cell projection. Its subcellular location is the cilium membrane. Gustducin-coupled receptor immplicated in the perception of bitter compounds in the oral cavity and the gastrointestinal tract. Signals through PLCB2 and the calcium-regulated cation channel TRPM5. Activated by the sulfonyl amide sweeteners saccharin and acesulfame K. In airway epithelial cells, binding of bitter compounds increases the intracellular calcium ion concentration and stimulates ciliary beat frequency. May act as chemosensory receptors in airway epithelial cells to detect and eliminate potential noxious agents from the airways. In Macaca mulatta (Rhesus macaque), this protein is Taste receptor type 2 member 43 (TAS2R43).